The chain runs to 578 residues: Threonylcarbamoyladenosine tRNA methylthiotransferase (578 aa).

The MTTase N-terminal domain maps to 63–171; the sequence is QKIWIRTWGC…VVEVVEETIK (109 aa). Cys72 and Cys108 together coordinate [4Fe-4S] cluster. A Phosphoserine modification is found at Ser121. 4 residues coordinate [4Fe-4S] cluster: Cys137, Cys213, Cys217, and Cys220. One can recognise a Radical SAM core domain in the interval 199-430; the sequence is RKNPLIEIIS…RVFHSYNPYD (232 aa). The TRAM domain occupies 430-492; the sequence is DHKIGERQQV…KHFLKGQPVS (63 aa). Thr498 carries the phosphothreonine modification. A helical membrane pass occupies residues 553–570; that stretch reads CALKVATGLALLALLLHF.

The protein belongs to the methylthiotransferase family. CDKAL1 subfamily. The cofactor is [4Fe-4S] cluster. As to expression, expressed in pancreas, liver and skeletal muscle, especially in white muscle fibers.

The protein resides in the endoplasmic reticulum membrane. It carries out the reaction N(6)-L-threonylcarbamoyladenosine(37) in tRNA + (sulfur carrier)-SH + AH2 + 2 S-adenosyl-L-methionine = 2-methylsulfanyl-N(6)-L-threonylcarbamoyladenosine(37) in tRNA + (sulfur carrier)-H + 5'-deoxyadenosine + L-methionine + A + S-adenosyl-L-homocysteine + 2 H(+). Its function is as follows. Catalyzes the methylthiolation of N6-threonylcarbamoyladenosine (t(6)A), leading to the formation of 2-methylthio-N6-threonylcarbamoyladenosine (ms(2)t(6)A) at position 37 in tRNAs that read codons beginning with adenine. This is Threonylcarbamoyladenosine tRNA methylthiotransferase (Cdkal1) from Mus musculus (Mouse).